Reading from the N-terminus, the 357-residue chain is Peptide chain release factor 1 (357 aa).

At Q234 the chain carries N5-methylglutamine. Residues 284-307 (KKQEQRSNDRKQQVGSGDRSERIR) show a composition bias toward basic and acidic residues. Residues 284 to 313 (KKQEQRSNDRKQQVGSGDRSERIRTYNFPQ) form a disordered region.

This sequence belongs to the prokaryotic/mitochondrial release factor family. Methylated by PrmC. Methylation increases the termination efficiency of RF1.

It is found in the cytoplasm. Peptide chain release factor 1 directs the termination of translation in response to the peptide chain termination codons UAG and UAA. The sequence is that of Peptide chain release factor 1 from Borrelia turicatae (strain 91E135).